Here is a 96-residue protein sequence, read N- to C-terminus: Small ribosomal subunit protein bS6 (96 aa).

It belongs to the bacterial ribosomal protein bS6 family.

Functionally, binds together with bS18 to 16S ribosomal RNA. The chain is Small ribosomal subunit protein bS6 from Beutenbergia cavernae (strain ATCC BAA-8 / DSM 12333 / CCUG 43141 / JCM 11478 / NBRC 16432 / NCIMB 13614 / HKI 0122).